Reading from the N-terminus, the 240-residue chain is UDP-2,3-diacylglucosamine hydrolase (240 aa).

Mn(2+) contacts are provided by Asp-8, His-10, Asp-41, Asn-79, and His-114. Substrate is bound at residue 79–80; it reads NR. 5 residues coordinate substrate: Asp-122, Ser-160, Asn-164, Lys-167, and His-195. Residues His-195 and His-197 each coordinate Mn(2+).

The protein belongs to the LpxH family. The cofactor is Mn(2+).

It is found in the cell inner membrane. The enzyme catalyses UDP-2-N,3-O-bis[(3R)-3-hydroxytetradecanoyl]-alpha-D-glucosamine + H2O = 2-N,3-O-bis[(3R)-3-hydroxytetradecanoyl]-alpha-D-glucosaminyl 1-phosphate + UMP + 2 H(+). It participates in glycolipid biosynthesis; lipid IV(A) biosynthesis; lipid IV(A) from (3R)-3-hydroxytetradecanoyl-[acyl-carrier-protein] and UDP-N-acetyl-alpha-D-glucosamine: step 4/6. Functionally, hydrolyzes the pyrophosphate bond of UDP-2,3-diacylglucosamine to yield 2,3-diacylglucosamine 1-phosphate (lipid X) and UMP by catalyzing the attack of water at the alpha-P atom. Involved in the biosynthesis of lipid A, a phosphorylated glycolipid that anchors the lipopolysaccharide to the outer membrane of the cell. The sequence is that of UDP-2,3-diacylglucosamine hydrolase from Yersinia enterocolitica serotype O:8 / biotype 1B (strain NCTC 13174 / 8081).